Consider the following 93-residue polypeptide: Small ribosomal subunit protein uS19 (93 aa).

This sequence belongs to the universal ribosomal protein uS19 family.

Its function is as follows. Protein S19 forms a complex with S13 that binds strongly to the 16S ribosomal RNA. The sequence is that of Small ribosomal subunit protein uS19 from Leptospira interrogans serogroup Icterohaemorrhagiae serovar copenhageni (strain Fiocruz L1-130).